The sequence spans 533 residues: Protein mono-ADP-ribosyltransferase PARP3 (533 aa).

Positions 1–30 are disordered; sequence MAPKPKPWVQTEGPEKKKGRQAGREEDPFR. The residue at position 6 (K6) is an N6-(ADP-ribosyl)lysine. 4 positions are modified to ADP-ribosyl glutamic acid: E12, E15, E26, and E34. The Nuclear localization signal signature appears at 14 to 20; sequence PEKKKGR. N6-(ADP-ribosyl)lysine is present on K37. One can recognise a WGR domain in the interval 59–150; sequence GTQVYEDYNC…DHFVSHPGKY (92 aa). An ADP-ribosyl aspartic acid modification is found at D141. E163 carries the ADP-ribosyl glutamic acid modification. In terms of domain architecture, PARP alpha-helical spans 182 to 300; that stretch reads PCSLDPATQK…DIELAQALQA (119 aa). At D210 the chain carries ADP-ribosyl aspartic acid. Residues E231, E309, E310, E344, and E449 each carry the ADP-ribosyl glutamic acid modification. Residues 313-533 form the PARP catalytic domain; the sequence is HPLDRDYQLL…RLRYLLEVHL (221 aa). The tract at residues 454-482 is disordered; sequence TDNPSLKSPPPGFDSVIARGHTEPDPTQD.

Belongs to the ARTD/PARP family. As to quaternary structure, interacts with PARP1; leading to activate PARP1 in absence of DNA. Interacts with PRKDC. Interacts with XRCC5/Ku80; the interaction is dependent on nucleic acids. Interacts with XRCC6/Ku70; the interaction is dependent on nucleic acids. Interacts with EZH2, HDAC1, HDAC2, SUZ12, YY1, LRIG3 and LIG4. Auto-mono-ADP-ribosylated. As to expression, widely expressed; the highest levels are in the kidney, skeletal muscle, liver, heart and spleen; also detected in pancreas, lung, placenta, brain, leukocytes, colon, small intestine, ovary, testis, prostate and thymus.

It is found in the nucleus. Its subcellular location is the chromosome. The protein localises to the cytoplasm. The protein resides in the cytoskeleton. It localises to the microtubule organizing center. It is found in the centrosome. Its subcellular location is the centriole. It carries out the reaction L-aspartyl-[protein] + NAD(+) = 4-O-(ADP-D-ribosyl)-L-aspartyl-[protein] + nicotinamide. The catalysed reaction is L-glutamyl-[protein] + NAD(+) = 5-O-(ADP-D-ribosyl)-L-glutamyl-[protein] + nicotinamide. It catalyses the reaction L-lysyl-[protein] + NAD(+) = N(6)-(ADP-D-ribosyl)-L-lysyl-[protein] + nicotinamide + H(+). With respect to regulation, mono-ADP-ribosyltransferase activity of PARP3 is selectively inhibited by ME0328 compound; ME0328 does not inhibit other ARTD/PARP enzymes, such as PARP1. Mono-ADP-ribosyltransferase is strongly inhibited by KU0058948 compound. Functionally, mono-ADP-ribosyltransferase that mediates mono-ADP-ribosylation of target proteins and plays a key role in the response to DNA damage. Mediates mono-ADP-ribosylation of glutamate, aspartate or lysine residues on target proteins. In contrast to PARP1 and PARP2, it is not able to mediate poly-ADP-ribosylation. Involved in DNA repair by mediating mono-ADP-ribosylation of a limited number of acceptor proteins involved in chromatin architecture and in DNA metabolism, such as histone H2B, XRCC5 and XRCC6. ADP-ribosylation follows DNA damage and appears as an obligatory step in a detection/signaling pathway leading to the reparation of DNA strand breaks. Involved in single-strand break repair by catalyzing mono-ADP-ribosylation of histone H2B on 'Glu-2' (H2BE2ADPr) of nucleosomes containing nicked DNA. Cooperates with the XRCC5-XRCC6 (Ku80-Ku70) heterodimer to limit end-resection thereby promoting accurate NHEJ. Suppresses G-quadruplex (G4) structures in response to DNA damage. Associates with a number of DNA repair factors and is involved in the response to exogenous and endogenous DNA strand breaks. Together with APLF, promotes the retention of the LIG4-XRCC4 complex on chromatin and accelerate DNA ligation during non-homologous end-joining (NHEJ). May link the DNA damage surveillance network to the mitotic fidelity checkpoint. Acts as a negative regulator of immunoglobulin class switch recombination, probably by controlling the level of AICDA /AID on the chromatin. In addition to proteins, also able to ADP-ribosylate DNA: mediates DNA mono-ADP-ribosylation of DNA strand break termini via covalent addition of a single ADP-ribose moiety to a 5'- or 3'-terminal phosphate residues in DNA containing multiple strand breaks. The chain is Protein mono-ADP-ribosyltransferase PARP3 from Homo sapiens (Human).